The following is a 97-amino-acid chain: Na(+)/H(+) antiporter subunit F1 (97 aa).

3 consecutive transmembrane segments (helical) span residues 3-23 (HNVI…AMLI), 35-55 (VVAL…FSIL), and 60-80 (YMIV…AVFS).

This sequence belongs to the CPA3 antiporters (TC 2.A.63) subunit F family. May form a heterooligomeric complex that consists of seven subunits: mnhA1, mnhB1, mnhC1, mnhD1, mnhE1, mnhF1 and mnhG1.

The protein localises to the cell membrane. Its function is as follows. Mnh complex is a Na(+)/H(+) antiporter involved in Na(+) excretion. The polypeptide is Na(+)/H(+) antiporter subunit F1 (mnhF1) (Staphylococcus aureus (strain Mu3 / ATCC 700698)).